A 333-amino-acid polypeptide reads, in one-letter code: Mitochondrial glycine transporter (333 aa).

Solcar repeat units follow at residues 10–93, 125–209, and 235–319; these read SKST…IRQS, LSNT…GKKR, and HAAS…LIRR. 2 helical membrane-spanning segments follow: residues 16–41 and 68–94; these read FAAG…TRVQ and GAVP…RQSA. The segment at 98-126 is disordered; that stretch reads SPLPSSSSSTTTSSSTTTSSSSSSLPKLS. 4 helical membrane passes run 131-156, 184-207, 239-265, and 294-312; these read LLAG…VRYE, GYGA…EQGK, INFA…KTRI, and GLAL…AWTV.

Belongs to the mitochondrial carrier (TC 2.A.29) family. SLC25A38 subfamily.

The protein resides in the mitochondrion inner membrane. It carries out the reaction glycine(in) = glycine(out). Its function is as follows. Mitochondrial glycine transporter that imports glycine into the mitochondrial matrix. Plays an important role in providing glycine for the first enzymatic step in heme biosynthesis, the condensation of glycine with succinyl-CoA to produce 5-aminolevulinate (ALA) in the mitochondrial matrix. The chain is Mitochondrial glycine transporter from Chaetomium globosum (strain ATCC 6205 / CBS 148.51 / DSM 1962 / NBRC 6347 / NRRL 1970) (Soil fungus).